Consider the following 209-residue polypeptide: Kynurenine formamidase (209 aa).

Tryptophan 20 serves as a coordination point for substrate. 3 residues coordinate Zn(2+): histidine 50, histidine 54, and aspartate 56. Catalysis depends on histidine 60, which acts as the Proton donor/acceptor. The Zn(2+) site is built by histidine 161 and glutamate 173.

It belongs to the Cyclase 1 superfamily. KynB family. As to quaternary structure, homodimer. Zn(2+) serves as cofactor.

The catalysed reaction is N-formyl-L-kynurenine + H2O = L-kynurenine + formate + H(+). It participates in amino-acid degradation; L-tryptophan degradation via kynurenine pathway; L-kynurenine from L-tryptophan: step 2/2. In terms of biological role, catalyzes the hydrolysis of N-formyl-L-kynurenine to L-kynurenine, the second step in the kynurenine pathway of tryptophan degradation. The sequence is that of Kynurenine formamidase from Bacillus cereus (strain ZK / E33L).